The following is a 200-amino-acid chain: MSNLNKDTEHTNGGGNVEEEVRTLFVSGLPVDIKPRELYLLFRPFKGYEGSLIKLTSKQPVGFVTFDSRAGAEAAKNALNGIRFDPENPQTLRLEFAKANTKMAKSKLMATPNPTNIHPALGAHFIARDPYDLTGAALIPASPEAWAPYPLYTTELTPAIPHAAFTYPAAAAAAAALHAQMRWYPPSEATQQGWKSRQFC.

Positions 22 to 99 constitute an RRM domain; it reads RTLFVSGLPV…QTLRLEFAKA (78 aa). An important for homodimerization region spans residues 32-42; that stretch reads DIKPRELYLLF.

Homodimer. In terms of tissue distribution, expressed in developing heart.

It is found in the cytoplasm. The protein localises to the nucleus. The protein resides in the stress granule. Its function is as follows. RNA-binding protein involved in the regulation of smooth muscle cell differentiation and proliferation in the gastrointestinal system. Binds NOG mRNA, the major inhibitor of the bone morphogenetic protein (BMP) pathway. Mediates an increase of NOG mRNA levels, thereby contributing to the negative regulation of BMP signaling pathway and promoting reversible dedifferentiation and proliferation of smooth muscle cells. Acts as a pre-mRNA alternative splicing regulator. Mediates ACTN1 and FLNB alternative splicing. Likely binds to mRNA tandem CAC trinucleotide or CA dinucleotide motifs. This chain is RNA-binding protein with multiple splicing 2, found in Gallus gallus (Chicken).